We begin with the raw amino-acid sequence, 476 residues long: tRNA(Ile)-lysidine synthase (476 aa).

ATP is bound at residue 30–35 (SGGPDS).

This sequence belongs to the tRNA(Ile)-lysidine synthase family.

It localises to the cytoplasm. It carries out the reaction cytidine(34) in tRNA(Ile2) + L-lysine + ATP = lysidine(34) in tRNA(Ile2) + AMP + diphosphate + H(+). Ligates lysine onto the cytidine present at position 34 of the AUA codon-specific tRNA(Ile) that contains the anticodon CAU, in an ATP-dependent manner. Cytidine is converted to lysidine, thus changing the amino acid specificity of the tRNA from methionine to isoleucine. This is tRNA(Ile)-lysidine synthase from Bacillus anthracis.